Here is a 626-residue protein sequence, read N- to C-terminus: 5'-AMP-activated protein kinase catalytic subunit alpha-2 (626 aa).

A compositionally biased stretch (basic and acidic residues) spans 1–24; it reads MFSHQDRDRDRKEDGGGDGTEMKS. The disordered stretch occupies residues 1–77; the sequence is MFSHQDRDRD…GETSTKQQQE (77 aa). Basic residues predominate over residues 38-49; it reads NLSRKLSAKSRK. The span at 58 to 77 shows a compositional bias: polar residues; it reads DNSSKMSSPGGETSTKQQQE. Residues 87–339 enclose the Protein kinase domain; it reads YILKETLGVG…IKDVIAHEWF (253 aa). ATP-binding positions include 93–101 and Lys-116; that span reads LGVGTFGKV. The active-site Proton acceptor is Asp-210. Thr-243 carries the post-translational modification Phosphothreonine; by par-4. The interval 541–568 is disordered; that stretch reads SGSASASSSRHASMSMPQKPAGIRGTRT. The segment covering 542–555 has biased composition (low complexity); sequence GSASASSSRHASMS.

It belongs to the protein kinase superfamily. CAMK Ser/Thr protein kinase family. SNF1 subfamily. As to quaternary structure, tetramer, composed of 2 regulatory (R) and 2 catalytic (C) subunits. In the presence of cAMP it dissociates into 2 active monomeric C subunits and an R dimer that binds four cAMP molecules. Phosphorylated on Thr-243 in response to oxidative stress and during dauer development. Phosphorylation at Thr-243 is increased in response to sodium azide or the AMP analog AICAR (5-amino-1-(5-phospho-beta-D-ribosyl)imidazole-4-carboxamide). As to expression, expressed in the pharynx, the ventral cord, neurons including the hermaphrodite-specific neuron, body wall muscles, the vulva, the excretory canal, and weakly in the intestine.

The catalysed reaction is L-seryl-[protein] + ATP = O-phospho-L-seryl-[protein] + ADP + H(+). It carries out the reaction L-threonyl-[protein] + ATP = O-phospho-L-threonyl-[protein] + ADP + H(+). Activated by phosphorylation. Its function is as follows. Acts as a sensor that couples lifespan to information about energy levels and insulin-like signals. Role in motility and response to oxidative stress. Involved in the establishment of germline stem cell (GSC) quiescence during dauer development. Plays a role in axon regrowth after axotomy in PLM neurons. Plays a role in the maintenance of glycogen stores which are necessary for resistance to hyperosmotic stress. Plays a role in the regulation of flp-7 secretion from ASI neurons. Keeps the CREB-regulated transcription coactivator 1 homolog crtc-1 inactive which in turn inhibits flp-7 secretion. Following serotonin signaling, derepresses crtc-1 which stimulates flp-7 secretion and subsequent body fat loss. The chain is 5'-AMP-activated protein kinase catalytic subunit alpha-2 from Caenorhabditis elegans.